Here is a 112-residue protein sequence, read N- to C-terminus: Ribonuclease P protein component (112 aa).

It belongs to the RnpA family. As to quaternary structure, consists of a catalytic RNA component (M1 or rnpB) and a protein subunit.

The enzyme catalyses Endonucleolytic cleavage of RNA, removing 5'-extranucleotides from tRNA precursor.. Functionally, RNaseP catalyzes the removal of the 5'-leader sequence from pre-tRNA to produce the mature 5'-terminus. It can also cleave other RNA substrates such as 4.5S RNA. The protein component plays an auxiliary but essential role in vivo by binding to the 5'-leader sequence and broadening the substrate specificity of the ribozyme. The polypeptide is Ribonuclease P protein component (Clostridium kluyveri (strain ATCC 8527 / DSM 555 / NBRC 12016 / NCIMB 10680 / K1)).